We begin with the raw amino-acid sequence, 208 residues long: GTP-binding protein Rho1 (208 aa).

GTP is bound at residue 19 to 26 (GDGACGKT). Residues 41–49 (YVPTVFDNY) carry the Effector region motif. GTP is bound by residues 66 to 70 (DTAGQ) and 124 to 127 (CKAD). The segment at 188 to 208 (GKQGKSKPKTKSSKKKKCVVL) is disordered. Residues 191-208 (GKSKPKTKSSKKKKCVVL) show a composition bias toward basic residues. Cys205 is modified (cysteine methyl ester). Cys205 is lipidated: S-geranylgeranyl cysteine. A propeptide spans 206–208 (VVL) (removed in mature form).

Belongs to the small GTPase superfamily. Rho family.

It is found in the cell membrane. In Kluyveromyces lactis (strain ATCC 8585 / CBS 2359 / DSM 70799 / NBRC 1267 / NRRL Y-1140 / WM37) (Yeast), this protein is GTP-binding protein Rho1 (RHO1).